The following is an 822-amino-acid chain: Structure-specific endonuclease subunit SLX4 (822 aa).

Disordered stretches follow at residues 1–39 (MSHL…PSAS), 73–117 (TPAV…PRPL), 277–362 (GTTN…GVSD), 390–418 (RVSS…TSVS), 456–507 (KSHE…SGQL), and 589–676 (KNSA…QASS). A compositionally biased stretch (polar residues) spans 13 to 39 (SPSPSQIFGSSTTPVATNSTHSEPSAS). The segment covering 280-294 (NSSSSEGSSNKSSGK) has biased composition (low complexity). The segment covering 310–320 (VTTITSLSTAQ) has biased composition (polar residues). The segment covering 342-354 (GKRSKSQTKKGGN) has biased composition (basic residues). Over residues 460 to 470 (SSTLTLPSTST) the composition is skewed to low complexity. The segment covering 471–484 (NASNQGFSSQNTIN) has biased composition (polar residues). Low complexity predominate over residues 490–506 (SQTTSTTTESTGVESGQ). Over residues 589-612 (KNSAPTSLPANNANPPDSHASGQK) the composition is skewed to polar residues. Positions 627-636 (TTKRASKAPQ) are enriched in basic residues. Positions 637 to 650 (KKQSTSSTSHSAKA) are enriched in low complexity.

Belongs to the SLX4 family. As to quaternary structure, forms a heterodimer with SLX1. In terms of processing, phosphorylated in response to DNA damage.

Its subcellular location is the nucleus. Functionally, regulatory subunit of the SLX1-SLX4 structure-specific endonuclease that resolves DNA secondary structures generated during DNA repair and recombination. Has endonuclease activity towards branched DNA substrates, introducing single-strand cuts in duplex DNA close to junctions with ss-DNA. This chain is Structure-specific endonuclease subunit SLX4, found in Coccidioides immitis (strain RS) (Valley fever fungus).